Here is a 252-residue protein sequence, read N- to C-terminus: ATP synthase subunit a (252 aa).

5 consecutive transmembrane segments (helical) span residues 33–53 (GQVF…AFVA), 92–112 (VPFV…GALV), 130–150 (DINT…YAGL), 196–216 (LVVS…VMVL), and 217–237 (GLFT…TYIG).

This sequence belongs to the ATPase A chain family. F-type ATPases have 2 components, CF(1) - the catalytic core - and CF(0) - the membrane proton channel. CF(1) has five subunits: alpha(3), beta(3), gamma(1), delta(1), epsilon(1). CF(0) has four main subunits: a, b, b' and c.

It is found in the cellular thylakoid membrane. Key component of the proton channel; it plays a direct role in the translocation of protons across the membrane. The sequence is that of ATP synthase subunit a from Thermosynechococcus vestitus (strain NIES-2133 / IAM M-273 / BP-1).